The chain runs to 219 residues: 7-cyano-7-deazaguanine synthase (219 aa).

Residue 10 to 20 (FSGGQDSTTCL) coordinates ATP. Positions 188, 196, 199, and 202 each coordinate Zn(2+).

This sequence belongs to the QueC family. Requires Zn(2+) as cofactor.

The enzyme catalyses 7-carboxy-7-deazaguanine + NH4(+) + ATP = 7-cyano-7-deazaguanine + ADP + phosphate + H2O + H(+). It participates in purine metabolism; 7-cyano-7-deazaguanine biosynthesis. Catalyzes the ATP-dependent conversion of 7-carboxy-7-deazaguanine (CDG) to 7-cyano-7-deazaguanine (preQ(0)). The chain is 7-cyano-7-deazaguanine synthase from Neisseria gonorrhoeae (strain NCCP11945).